We begin with the raw amino-acid sequence, 366 residues long: UDP-N-acetylglucosamine--N-acetylmuramyl-(pentapeptide) pyrophosphoryl-undecaprenol N-acetylglucosamine transferase (366 aa).

UDP-N-acetyl-alpha-D-glucosamine is bound by residues 14-16 (TGG), Asn125, Arg168, Ser196, and Gln297.

This sequence belongs to the glycosyltransferase 28 family. MurG subfamily.

Its subcellular location is the cell inner membrane. The catalysed reaction is di-trans,octa-cis-undecaprenyl diphospho-N-acetyl-alpha-D-muramoyl-L-alanyl-D-glutamyl-meso-2,6-diaminopimeloyl-D-alanyl-D-alanine + UDP-N-acetyl-alpha-D-glucosamine = di-trans,octa-cis-undecaprenyl diphospho-[N-acetyl-alpha-D-glucosaminyl-(1-&gt;4)]-N-acetyl-alpha-D-muramoyl-L-alanyl-D-glutamyl-meso-2,6-diaminopimeloyl-D-alanyl-D-alanine + UDP + H(+). The protein operates within cell wall biogenesis; peptidoglycan biosynthesis. Cell wall formation. Catalyzes the transfer of a GlcNAc subunit on undecaprenyl-pyrophosphoryl-MurNAc-pentapeptide (lipid intermediate I) to form undecaprenyl-pyrophosphoryl-MurNAc-(pentapeptide)GlcNAc (lipid intermediate II). This is UDP-N-acetylglucosamine--N-acetylmuramyl-(pentapeptide) pyrophosphoryl-undecaprenol N-acetylglucosamine transferase from Bradyrhizobium diazoefficiens (strain JCM 10833 / BCRC 13528 / IAM 13628 / NBRC 14792 / USDA 110).